Consider the following 199-residue polypeptide: uncharacterized protein (199 aa).

This is an uncharacterized protein from Treponema pallidum (strain Nichols).